The following is a 1059-amino-acid chain: Zinc finger protein 865 (1059 aa).

Disordered regions lie at residues 1 to 24, 58 to 142, and 161 to 206; these read MEAN…EDGV, LPCA…DAAF, and NLKR…CDPT. Gly residues predominate over residues 8-21; sequence SGAGGGGSSGIGGE. Over residues 61 to 78 the composition is skewed to pro residues; the sequence is APGPPPQPPPQPPPPQYD. Residues 93–119 show a composition bias toward low complexity; it reads SSSSSSSSSSSSSSSSSSSSSSSSSQA. 2 stretches are compositionally biased toward pro residues: residues 124–137 and 183–198; these read PPLP…PPPL and APGP…PGPP. 2 consecutive C2H2-type zinc fingers follow at residues 224–246 and 252–274; these read FPCG…MLVH and YECG…RRCH. The interval 275 to 342 is disordered; it reads KDVPPAAGGP…PAGVGVPPPA (68 aa). Over residues 281–296 the composition is skewed to pro residues; that stretch reads AGGPPQPGPHLPPLGL. 2 stretches are compositionally biased toward low complexity: residues 297-316 and 324-337; these read PAPA…SSGP and APSA…AGVG. C2H2-type zinc fingers lie at residues 350-372, 378-400, 407-429, and 441-463; these read FACP…QIIH, FSCS…VKTH, LPCG…QAAH, and YPCD…KAAH. Residues 461-503 form a disordered region; the sequence is AAHAPPAAAAEAPKDGAASAPQPPPTFPPGPYLLPPDPPTTDS. Residues 463–480 show a composition bias toward low complexity; the sequence is HAPPAAAAEAPKDGAASA. Over residues 481 to 499 the composition is skewed to pro residues; it reads PQPPPTFPPGPYLLPPDPP. 5 consecutive C2H2-type zinc fingers follow at residues 550–572, 578–600, 606–628, 669–691, and 697–719; these read FCCG…ERIH, HQCP…HVVH, YKCE…RQVH, YACS…KEVH, and YGCD…KLVH. The disordered stretch occupies residues 726–747; sequence LLPPAPGGLQPPDGSSGTDAAS. 9 consecutive C2H2-type zinc fingers follow at residues 792 to 814, 820 to 842, 848 to 870, 876 to 898, 904 to 926, 932 to 954, 960 to 982, 989 to 1011, and 1017 to 1039; these read FSCA…KYVH, LGCG…RRSH, FRCP…QRCH, YRCG…RVVH, FKCG…RRLH, QRCS…QRLH, YRCE…QRAH, LRCP…LAAH, and FRCS…RLAH. K802 participates in a covalent cross-link: Glycyl lysine isopeptide (Lys-Gly) (interchain with G-Cter in SUMO2). Residue K1040 forms a Glycyl lysine isopeptide (Lys-Gly) (interchain with G-Cter in SUMO2) linkage.

This sequence belongs to the krueppel C2H2-type zinc-finger protein family.

It localises to the nucleus. Its function is as follows. May be involved in transcriptional regulation. In Homo sapiens (Human), this protein is Zinc finger protein 865 (ZNF865).